We begin with the raw amino-acid sequence, 122 residues long: Small ribosomal subunit protein uS13 (122 aa).

Residues 94–122 (LSLPVRGQRTKTNSRTRKGKRKTVAGKKK) are disordered. The span at 101-122 (QRTKTNSRTRKGKRKTVAGKKK) shows a compositional bias: basic residues.

It belongs to the universal ribosomal protein uS13 family. As to quaternary structure, part of the 30S ribosomal subunit. Forms a loose heterodimer with protein S19. Forms two bridges to the 50S subunit in the 70S ribosome.

In terms of biological role, located at the top of the head of the 30S subunit, it contacts several helices of the 16S rRNA. In the 70S ribosome it contacts the 23S rRNA (bridge B1a) and protein L5 of the 50S subunit (bridge B1b), connecting the 2 subunits; these bridges are implicated in subunit movement. Contacts the tRNAs in the A and P-sites. In Chlamydia muridarum (strain MoPn / Nigg), this protein is Small ribosomal subunit protein uS13.